The following is an 89-amino-acid chain: Cell division topological specificity factor (89 aa).

Belongs to the MinE family.

In terms of biological role, prevents the cell division inhibition by proteins MinC and MinD at internal division sites while permitting inhibition at polar sites. This ensures cell division at the proper site by restricting the formation of a division septum at the midpoint of the long axis of the cell. This chain is Cell division topological specificity factor, found in Pectobacterium atrosepticum (strain SCRI 1043 / ATCC BAA-672) (Erwinia carotovora subsp. atroseptica).